The primary structure comprises 30 residues: Brevinin-2Ej (30 aa).

An intrachain disulfide couples C24 to C30.

As to expression, expressed by the skin glands.

It is found in the secreted. Functionally, shows antibacterial activity against representative Gram-negative and Gram-positive bacterial species, and hemolytic activity. The sequence is that of Brevinin-2Ej from Pelophylax ridibundus (Marsh frog).